A 115-amino-acid polypeptide reads, in one-letter code: MTTPTAGDDILSRIADTLATRRPEAGGDPQSSYVAKLLSKAPDAFLKKIGEEATELVMAAKDGQPDRIISETADLWFHCLVALTHYNLRPEDVLAELARREGLSGLEEKARRPRD.

It belongs to the PRA-PH family.

It localises to the cytoplasm. The enzyme catalyses 1-(5-phospho-beta-D-ribosyl)-ATP + H2O = 1-(5-phospho-beta-D-ribosyl)-5'-AMP + diphosphate + H(+). It functions in the pathway amino-acid biosynthesis; L-histidine biosynthesis; L-histidine from 5-phospho-alpha-D-ribose 1-diphosphate: step 2/9. The chain is Phosphoribosyl-ATP pyrophosphatase from Bordetella parapertussis (strain 12822 / ATCC BAA-587 / NCTC 13253).